The chain runs to 460 residues: Asparagine--tRNA ligase (460 aa).

This sequence belongs to the class-II aminoacyl-tRNA synthetase family. Homodimer.

The protein localises to the cytoplasm. It catalyses the reaction tRNA(Asn) + L-asparagine + ATP = L-asparaginyl-tRNA(Asn) + AMP + diphosphate + H(+). The protein is Asparagine--tRNA ligase of Picosynechococcus sp. (strain ATCC 27264 / PCC 7002 / PR-6) (Agmenellum quadruplicatum).